A 470-amino-acid chain; its full sequence is Calcitonin gene-related peptide type 1 receptor (470 aa).

Positions 1 to 23 (MTASCWTICLFLLGSVTEFIVLA) are cleaved as a signal peptide. At 24-147 (SPEVNESQQQ…HTTEGRRTAM (124 aa)) the chain is on the extracellular side. N-linked (GlcNAc...) asparagine glycans are attached at residues Asn28, Asn74, Asn126, and Asn131. 3 disulfide bridges follow: Cys56–Cys82, Cys73–Cys113, and Cys96–Cys135. The chain crosses the membrane as a helical span at residues 148 to 172 (NLFYLALIGHGLSLTSLFISLGIFF). At 173–183 (HFKSLSCQRIT) the chain is on the cytoplasmic side. The chain crosses the membrane as a helical span at residues 184–206 (LHKNLFFSFVLNSIITIIWLTAV). At 207–217 (ANNQELVQQNP) the chain is on the extracellular side. The chain crosses the membrane as a helical span at residues 218-246 (ISCKISQFIHLYIFGCNYFWMLCEGIYLH). Residues 247-260 (TLIVVAVFAEKQHL) lie on the Cytoplasmic side of the membrane. The helical transmembrane segment at 261–281 (MWYYLLGWGFPLIPATIHAVA) threads the bilayer. The Extracellular segment spans residues 282–297 (RSYYYNDNCWISSNTS). Asn295 carries an N-linked (GlcNAc...) asparagine glycan. The helical transmembrane segment at 298-322 (LLYIIHGPICAAMLVNLFFLLNIVR) threads the bilayer. Residues 323 to 337 (VLITKLKVTHQAKSS) are Cytoplasmic-facing. The helical transmembrane segment at 338–359 (LYMKAVRATLILVPLLGIQYVL) threads the bilayer. Residues 360 to 374 (LPYKPSGRVSAEIYD) are Extracellular-facing. A helical membrane pass occupies residues 375-395 (YIMHILMHYQGLLVATIFCFF). At 396-470 (NGEVQAVLRR…AIIKPENPFA (75 aa)) the chain is on the cytoplasmic side.

The protein belongs to the G-protein coupled receptor 2 family.

It is found in the cell membrane. In terms of biological role, may function as G protein-coupled receptor for calcitonin-gene-related peptides and adrenomedullin. Specificity may be modulated by accessory proteins. May activate cAMP-dependent pathway. The sequence is that of Calcitonin gene-related peptide type 1 receptor (calcrla) from Danio rerio (Zebrafish).